The chain runs to 179 residues: Shikimate kinase (179 aa).

Residue 22-27 (GTGKSS) participates in ATP binding. Ser26 lines the Mg(2+) pocket. Residues Asp44, Arg68, and Gly90 each coordinate substrate. Residue Arg128 coordinates ATP. Arg147 serves as a coordination point for substrate.

Belongs to the shikimate kinase family. As to quaternary structure, monomer. It depends on Mg(2+) as a cofactor.

The protein localises to the cytoplasm. The enzyme catalyses shikimate + ATP = 3-phosphoshikimate + ADP + H(+). The protein operates within metabolic intermediate biosynthesis; chorismate biosynthesis; chorismate from D-erythrose 4-phosphate and phosphoenolpyruvate: step 5/7. Its function is as follows. Catalyzes the specific phosphorylation of the 3-hydroxyl group of shikimic acid using ATP as a cosubstrate. In Geobacter metallireducens (strain ATCC 53774 / DSM 7210 / GS-15), this protein is Shikimate kinase.